A 375-amino-acid polypeptide reads, in one-letter code: MADKQTVVVDNGSGVVKAGFSGEDAPRAVFPSIIGRPKNVSALIGVDSASEYIGDEAQQKRGVLKIFYPIEHGIIKDWEDMEKIWNHTFYVELRVQPDEHPVLLTEAPLNPKTNREKMTQIMFETFNVPALYVAIQAVLSLYSAGRTTGIVCDAGDGVTHTVPIYEGFSIPHAVSRIQLAGRDLTTFMAKLLTEKGYVFTSSAEMEIVRDIKEKLCFVALDYEAAMKQSYESTTFEKNYELPDGRVITIGNARFRCPEYLFKPLEMNGKELDSIQSLTYNSIQECDVDVRRDLYQNITLSGGTTMYEGIGERLLKEIEARAPKSINVKVIASPDRRFAVWRGGSTLTSLSTFASMWITKEDYDENGASIVHRKCL.

Belongs to the actin family.

It is found in the cytoplasm. The protein localises to the cytoskeleton. The catalysed reaction is ATP + H2O = ADP + phosphate + H(+). Actins are highly conserved proteins that are involved in various types of cell motility and are ubiquitously expressed in all eukaryotic cells. This is Actin, cytoplasmic from Sterkiella nova (Ciliate).